The sequence spans 336 residues: Glycerol-3-phosphate dehydrogenase [NAD(P)+] (336 aa).

3 residues coordinate NADPH: Ser11, Trp12, and Lys106. The sn-glycerol 3-phosphate site is built by Lys106, Gly134, and Ser136. Position 138 (Ala138) interacts with NADPH. Sn-glycerol 3-phosphate-binding residues include Lys189, Asp242, Ser252, Arg253, and Asn254. The Proton acceptor role is filled by Lys189. Arg253 lines the NADPH pocket. NADPH-binding residues include Val277 and Glu279.

This sequence belongs to the NAD-dependent glycerol-3-phosphate dehydrogenase family.

Its subcellular location is the cytoplasm. It catalyses the reaction sn-glycerol 3-phosphate + NAD(+) = dihydroxyacetone phosphate + NADH + H(+). The enzyme catalyses sn-glycerol 3-phosphate + NADP(+) = dihydroxyacetone phosphate + NADPH + H(+). Its pathway is membrane lipid metabolism; glycerophospholipid metabolism. Functionally, catalyzes the reduction of the glycolytic intermediate dihydroxyacetone phosphate (DHAP) to sn-glycerol 3-phosphate (G3P), the key precursor for phospholipid synthesis. This chain is Glycerol-3-phosphate dehydrogenase [NAD(P)+], found in Agathobacter rectalis (strain ATCC 33656 / DSM 3377 / JCM 17463 / KCTC 5835 / VPI 0990) (Eubacterium rectale).